Reading from the N-terminus, the 322-residue chain is DNA primase small subunit PriS (322 aa).

Active-site residues include aspartate 100, aspartate 102, and aspartate 228.

This sequence belongs to the eukaryotic-type primase small subunit family. Heterodimer of a small subunit (PriS) and a large subunit (PriL). Mg(2+) serves as cofactor. It depends on Mn(2+) as a cofactor.

Its function is as follows. Catalytic subunit of DNA primase, an RNA polymerase that catalyzes the synthesis of short RNA molecules used as primers for DNA polymerase during DNA replication. The small subunit contains the primase catalytic core and has DNA synthesis activity on its own. Binding to the large subunit stabilizes and modulates the activity, increasing the rate of DNA synthesis while decreasing the length of the DNA fragments, and conferring RNA synthesis capability. The DNA polymerase activity may enable DNA primase to also catalyze primer extension after primer synthesis. May also play a role in DNA repair. This Sulfolobus acidocaldarius (strain ATCC 33909 / DSM 639 / JCM 8929 / NBRC 15157 / NCIMB 11770) protein is DNA primase small subunit PriS.